The sequence spans 420 residues: D-tagatose-1,6-bisphosphate aldolase subunit GatZ (420 aa).

Belongs to the GatZ/KbaZ family. GatZ subfamily. Forms a complex with GatY.

Its pathway is carbohydrate metabolism; D-tagatose 6-phosphate degradation; D-glyceraldehyde 3-phosphate and glycerone phosphate from D-tagatose 6-phosphate: step 2/2. In terms of biological role, component of the tagatose-1,6-bisphosphate aldolase GatYZ that is required for full activity and stability of the Y subunit. Could have a chaperone-like function for the proper and stable folding of GatY. When expressed alone, GatZ does not show any aldolase activity. Is involved in the catabolism of galactitol. The polypeptide is D-tagatose-1,6-bisphosphate aldolase subunit GatZ (Shigella flexneri serotype 5b (strain 8401)).